Reading from the N-terminus, the 249-residue chain is Protein twisted gastrulation (249 aa).

Positions 1–23 are cleaved as a signal peptide; sequence MQLLCYFVILFVGIAPWSSLAND. Asn199 carries N-linked (GlcNAc...) asparagine glycosylation.

The protein belongs to the twisted gastrulation protein family. Component of a complex composed of dpp, sog and tsg. First appears in stage 4 embryos, expressed in two domains: a broad mid-dorsal saddle and an anterior cap, expression between the domains is continuous across the dorsal midline. At stage 5, expression is refined into 4 graded stripes in the mid-dorsal region and a paired domain in the anterior region. During stages 7 and 8, anterior expression fades and the mid dorsal stripes are located between the anterior and posterior transverse furrow (ATF and PTF). Expressing cells become incorporated into the deepening PTF.

The protein resides in the secreted. Functionally, involved in dorsal-ventral patterning. Required for specification of a narrow strip of dorsal midline cells that will give rise to the amnioserosa, but not for specification of dorsal ectoderm cells. Inhibits BMP signaling; enhances the binding of sog to dpp, thus enhancing the antagonistic activity of sog. The sequence is that of Protein twisted gastrulation (tsg) from Drosophila melanogaster (Fruit fly).